Here is a 68-residue protein sequence, read N- to C-terminus: Large ribosomal subunit protein bL35 (68 aa).

The protein belongs to the bacterial ribosomal protein bL35 family.

This chain is Large ribosomal subunit protein bL35, found in Persephonella marina (strain DSM 14350 / EX-H1).